Here is a 411-residue protein sequence, read N- to C-terminus: Na(+)/H(+) antiporter NhaA 2 (411 aa).

Transmembrane regions (helical) follow at residues 18–38 (VGGSILLIAAAIALVWANSPV), 59–79 (LTVGTWAQDGLLAVFFFVAGL), 97–117 (LLPIIAACGGVVVPAIIAATI), 127–147 (GWAIPVATDIAFALGVLALTG), 167–187 (LLAIVLIAVLFTSSIALLWLL), 218–238 (WYCMHDAGIHATLAGVALGLL), 261–281 (PLSAGVCVPVFALFASGVALS), 297–317 (VIAGLLVGKTVGIFGISWLAI), 338–358 (VLGAIGFTVSLLVADLALAGI), and 366–386 (IAKVAVLVTSLTASLIGSALL).

It belongs to the NhaA Na(+)/H(+) (TC 2.A.33) antiporter family.

Its subcellular location is the cell membrane. It carries out the reaction Na(+)(in) + 2 H(+)(out) = Na(+)(out) + 2 H(+)(in). Its function is as follows. Na(+)/H(+) antiporter that extrudes sodium in exchange for external protons. This is Na(+)/H(+) antiporter NhaA 2 from Rhodococcus jostii (strain RHA1).